A 487-amino-acid chain; its full sequence is Glutamyl-tRNA(Gln) amidotransferase subunit A (487 aa).

Catalysis depends on charge relay system residues Lys-78 and Ser-153. Residue Ser-177 is the Acyl-ester intermediate of the active site.

This sequence belongs to the amidase family. GatA subfamily. As to quaternary structure, heterotrimer of A, B and C subunits.

It carries out the reaction L-glutamyl-tRNA(Gln) + L-glutamine + ATP + H2O = L-glutaminyl-tRNA(Gln) + L-glutamate + ADP + phosphate + H(+). Functionally, allows the formation of correctly charged Gln-tRNA(Gln) through the transamidation of misacylated Glu-tRNA(Gln) in organisms which lack glutaminyl-tRNA synthetase. The reaction takes place in the presence of glutamine and ATP through an activated gamma-phospho-Glu-tRNA(Gln). The sequence is that of Glutamyl-tRNA(Gln) amidotransferase subunit A from Oenococcus oeni (strain ATCC BAA-331 / PSU-1).